We begin with the raw amino-acid sequence, 941 residues long: MPDASLFNGTSFITLFAPNISLFQASIDFYTDRLGFAIKETSNQKLVWLQLEEDSNNVSIQLLLDPEHAASVSQIDQNIRNLTRSLYRKDWRSIQSNIAFKSSSLSKLVKLLKDGGHPVQQSPNEISPFEVYTLDPLGSLIGFSGFKNPFAVNERSLLPKVSEEKAYRTEDDSEKLFTPIRKTIGVMTSGGDSPGMNPFVRAVVRAGIYKGCKVFCIHEGYEGLVRGGEKYIKETQWHDVRGWLVEGGTNIGTARCKEFRERSGRLKACKNMIDMGIDALIVCGGDGSLTGADRFRSEWPSLIEELLQTERISQQQFETYQNLNICGAVGSIDNDMSSTDATIGAFSSLDRICRAIDYIDATANSHSRAFIVEVMGRHCGWLGLLAGLATSADYILIPEKPASSREWQDQMCDIVSKHRARGKRKTIVIVAEGAISNDLSPISCDQVKDVLVNRLGLDTRVTTLGHVQRGGTAVAFDRIYATLQGVEAVNAVLECNADTPSPMIAIKEDQITRVPLVDAVELTQQVAKSIESRNFKRAISLRDSEFVEHMKNFISTNSADHVPPSLPLEKRKKVAIINVGAPAGGMNSAVYSMATYCMSRGHVPYAIHNGFSGLARHESVRSINWLDIEGWGSLGGSEIGTNRTLPNDADIGMIAYFFEKYGFDGLILVGGFEAFISLHQLERARINYPSLRIPLVLIPATISNNVPGTEYSLGSDTCLNSFMEYCDVIKQSAAATRNRVFVVEVQGGNSGYIATHAQLACGAQISYVPEEGISLAQLEMDINSLKESFANDQGKTKSGRLILKSENASKVLTTEVISTIIDDEASGRFDSKTAIPGHVQQGGIPSPMDRVRASRFAIRAVSFIEKHSDKCQAFKNSISFRQTDEITSTAVVLGIHKSQLRFTPIRQLYDFESDVPRRMRKNIFWSNVREISDMLSGRTSL.

Residues 2–558 (PDASLFNGTS…HMKNFISTNS (557 aa)) are N-terminal catalytic PFK domain 1. Residues Gly-191, 255–256 (RC), and 285–288 (GDGS) each bind ATP. Mg(2+) is bound at residue Asp-286. Residues 331–333 (SID), Arg-368, 375–377 (MGR), Glu-432, Arg-460, and 466–469 (HVQR) contribute to the beta-D-fructose 6-phosphate site. Asp-333 acts as the Proton acceptor in catalysis. The interdomain linker stretch occupies residues 559–572 (ADHVPPSLPLEKRK). The interval 573–941 (KVAIINVGAP…SDMLSGRTSL (369 aa)) is C-terminal regulatory PFK domain 2. Residues Arg-643, 701-705 (TISNN), Arg-739, 746-748 (QGG), Glu-806, Lys-832, 838-841 (HVQQ), and Arg-918 each bind beta-D-fructose 2,6-bisphosphate.

It belongs to the phosphofructokinase type A (PFKA) family. ATP-dependent PFK group I subfamily. Eukaryotic two domain clade 'E' sub-subfamily. As to quaternary structure, heterododecamer of 4 alpha, 4 beta and 4 gamma chains. The gamma chain bridges the N-terminal halves of the alpha and beta subunits. It depends on Mg(2+) as a cofactor.

It localises to the cytoplasm. It catalyses the reaction beta-D-fructose 6-phosphate + ATP = beta-D-fructose 1,6-bisphosphate + ADP + H(+). It participates in carbohydrate degradation; glycolysis; D-glyceraldehyde 3-phosphate and glycerone phosphate from D-glucose: step 3/4. Its activity is regulated as follows. Allosterically activated by ADP, AMP, or fructose 2,6-bisphosphate, and allosterically inhibited by ATP or citrate. Catalyzes the phosphorylation of D-fructose 6-phosphate to fructose 1,6-bisphosphate by ATP, the first committing step of glycolysis. This chain is ATP-dependent 6-phosphofructokinase subunit beta (PFK2), found in Komagataella phaffii (strain GS115 / ATCC 20864) (Yeast).